A 258-amino-acid polypeptide reads, in one-letter code: Probable enoyl-CoA hydratase (258 aa).

This sequence belongs to the enoyl-CoA hydratase/isomerase family.

The catalysed reaction is a (3S)-3-hydroxyacyl-CoA = a (2E)-enoyl-CoA + H2O. It carries out the reaction a 4-saturated-(3S)-3-hydroxyacyl-CoA = a (3E)-enoyl-CoA + H2O. The protein operates within lipid metabolism; fatty acid beta-oxidation. Functionally, involved in the degradation of long-chain fatty acids. This is Probable enoyl-CoA hydratase (fadB) from Bacillus subtilis (strain 168).